We begin with the raw amino-acid sequence, 194 residues long: Oligoribonuclease (194 aa).

Positions 11 to 174 constitute an Exonuclease domain; it reads LIWIDLEMTG…SDVRDSIDEL (164 aa). Residue Tyr-132 is part of the active site.

The protein belongs to the oligoribonuclease family.

The protein localises to the cytoplasm. Its function is as follows. 3'-to-5' exoribonuclease specific for small oligoribonucleotides. The sequence is that of Oligoribonuclease from Xanthomonas axonopodis pv. citri (strain 306).